A 1135-amino-acid chain; its full sequence is APC membrane recruitment protein 1 (1135 aa).

Met1 carries the post-translational modification N-acetylmethionine. Disordered stretches follow at residues 1 to 115 (METQ…EGTG), 156 to 308 (AEKF…VGDP), 339 to 405 (SMTD…EDDD), 447 to 484 (GLAPGELLTPQSDQQESAPNSDEGYYDSTTPGFEDDSG), 736 to 764 (NFGGSPRRAYPTYSPPEDPEEEEVEKEGN), 921 to 948 (LQAQQEDSDEEDEEEEEGEWSRDSPLSL), and 1007 to 1135 (VPES…NLAK). The span at 10-19 (QAKGAAASGS) shows a compositional bias: low complexity. The span at 23-35 (QTAEKGAKNKAAE) shows a compositional bias: basic and acidic residues. Over residues 36–50 (ATEGPTSEPSSSGPG) the composition is skewed to low complexity. The segment covering 73 to 83 (FGGGRSKGSGK) has biased composition (gly residues). Basic and acidic residues-rich tracts occupy residues 94–107 (KTHDGLSEAAHGPE) and 196–208 (GPERVRARPHEHV). Pro residues predominate over residues 238–248 (KVSPTPEPSPP). Phosphoserine is present on Ser246. Basic and acidic residues-rich tracts occupy residues 253–262 (MACKDPEKPM) and 282–291 (EEPHSPETGE). Positions 373–405 (ALPDDDDEEEEEEEEVELEEEEEEVKEEEEDDD) are enriched in acidic residues. Positions 455 to 466 (TPQSDQQESAPN) are enriched in polar residues. Positions 926 to 938 (EDSDEEDEEEEEG) are enriched in acidic residues. The span at 1058–1069 (PSCSSSSGGFSP) shows a compositional bias: low complexity. A compositionally biased stretch (polar residues) spans 1119–1135 (SLATSYSSTAMNGNLAK).

It belongs to the Amer family. As to quaternary structure, interacts with CTNNB1, AXIN1, LRP6, KEAP1, APC and BTRC. Interacts with SCF (SKP1-CUL1-F-box protein) E3 ubiquitin-protein ligase complexes containing BTRC and/or FBXW11. Identified in the beta-catenin destruction complex containing CTNNB1, APC, AXIN1 and AXIN2. Interacts with WT1. Detected in fetal and adult kidney, brain and spleen.

It localises to the cytoplasm. The protein localises to the cell membrane. The protein resides in the nucleus. Regulator of the canonical Wnt signaling pathway. Acts by specifically binding phosphatidylinositol 4,5-bisphosphate (PtdIns(4,5)P2), translocating to the cell membrane and interacting with key regulators of the canonical Wnt signaling pathway, such as components of the beta-catenin destruction complex. Acts both as a positive and negative regulator of the Wnt signaling pathway, depending on the context: acts as a positive regulator by promoting LRP6 phosphorylation. Also acts as a negative regulator by acting as a scaffold protein for the beta-catenin destruction complex and promoting stabilization of Axin at the cell membrane. Promotes CTNNB1 ubiquitination and degradation. Involved in kidney development. The chain is APC membrane recruitment protein 1 (AMER1) from Homo sapiens (Human).